The following is a 491-amino-acid chain: Galactose-1-phosphate uridylyltransferase (491 aa).

It belongs to the galactose-1-phosphate uridylyltransferase type 2 family.

Its subcellular location is the cytoplasm. The catalysed reaction is alpha-D-galactose 1-phosphate + UDP-alpha-D-glucose = alpha-D-glucose 1-phosphate + UDP-alpha-D-galactose. It participates in carbohydrate metabolism; galactose metabolism. The polypeptide is Galactose-1-phosphate uridylyltransferase (galT) (Streptococcus mutans serotype c (strain ATCC 700610 / UA159)).